A 245-amino-acid chain; its full sequence is DNA polymerase sliding clamp 1 (245 aa).

Belongs to the PCNA family. In terms of assembly, the subunits circularize to form a toroid; DNA passes through its center. Replication factor C (RFC) is required to load the toroid on the DNA. Forms a dimeric complex with PCNA3 and a trimeric complex with PCNA2 and PCNA3; does not form homotrimers.

Functionally, sliding clamp subunit that acts as a moving platform for DNA processing. Responsible for tethering the catalytic subunit of DNA polymerase and other proteins to DNA during high-speed replication. The trimeric complex inhibits DNA ligase and both 3'-5' and 5'-3' activity of Hel308 (Hjm) helicase, but stimulates Hjc, the Holliday junction cleavage enzyme. This Sulfurisphaera tokodaii (strain DSM 16993 / JCM 10545 / NBRC 100140 / 7) (Sulfolobus tokodaii) protein is DNA polymerase sliding clamp 1.